Reading from the N-terminus, the 175-residue chain is Peptide methionine sulfoxide reductase MsrA (175 aa).

Residue Cys10 is part of the active site.

The protein belongs to the MsrA Met sulfoxide reductase family.

The catalysed reaction is L-methionyl-[protein] + [thioredoxin]-disulfide + H2O = L-methionyl-(S)-S-oxide-[protein] + [thioredoxin]-dithiol. The enzyme catalyses [thioredoxin]-disulfide + L-methionine + H2O = L-methionine (S)-S-oxide + [thioredoxin]-dithiol. In terms of biological role, has an important function as a repair enzyme for proteins that have been inactivated by oxidation. Catalyzes the reversible oxidation-reduction of methionine sulfoxide in proteins to methionine. This chain is Peptide methionine sulfoxide reductase MsrA, found in Clavibacter sepedonicus (Clavibacter michiganensis subsp. sepedonicus).